We begin with the raw amino-acid sequence, 769 residues long: Dolichyl-phosphate-mannose--protein mannosyltransferase 2 (769 aa).

A disordered region spans residues 1–44 (MSTSVEPNETEALLRKQNDLSTTASIEEKYPHQQGEAAEDDDDT). Residue Asn-8 is glycosylated (N-linked (GlcNAc...) asparagine). A helical transmembrane segment spans residues 59 to 79 (SLKQVESILAPIVFTALSFFV). N-linked (GlcNAc...) asparagine glycosylation occurs at Asn-132. Transmembrane regions (helical) follow at residues 152-169 (MRLF…LAYF), 176-194 (FSMF…ESSY), and 200-218 (FILL…VFCF). Asn-226 carries N-linked (GlcNAc...) asparagine glycosylation. 2 consecutive transmembrane segments (helical) span residues 252-272 (VKMV…VDLW) and 288-308 (HWFA…MLSF). Asn-324 carries N-linked (GlcNAc...) asparagine glycosylation. Positions 342–397 (PREVSMFHSVITLKNQGLSGGLLHSHVQTFPEGSKQQQVTTYGHKDSNNNWIFQRA) constitute an MIR 1 domain. Asn-408, Asn-453, and Asn-462 each carry an N-linked (GlcNAc...) asparagine glycan. MIR domains follow at residues 412-468 (IEYI…VEIM) and 474-534 (EDKM…IENN). Helical transmembrane passes span 615–635 (TTWT…YYLI), 655–675 (FLMG…PFAI), 679–699 (VTYV…FCYE), and 718–738 (LLYL…FWYF).

This sequence belongs to the glycosyltransferase 39 family. As to quaternary structure, PMT1 and PMT2 form a functional heterodimer.

It localises to the endoplasmic reticulum membrane. The catalysed reaction is a di-trans,poly-cis-dolichyl beta-D-mannosyl phosphate + L-seryl-[protein] = 3-O-(alpha-D-mannosyl)-L-seryl-[protein] + a di-trans,poly-cis-dolichyl phosphate + H(+). The enzyme catalyses a di-trans,poly-cis-dolichyl beta-D-mannosyl phosphate + L-threonyl-[protein] = 3-O-(alpha-D-mannosyl)-L-threonyl-[protein] + a di-trans,poly-cis-dolichyl phosphate + H(+). Its pathway is protein modification; protein glycosylation. Functionally, protein mannosyltransferase (PMT) involved in hyphal growth and drug sensitivity. Transfers mannose from Dol-P-mannose to Ser or Thr residues on proteins. PMT1, PMT2 and PMT4 account for most of the protein-O-glycosylation activity, while PMT5 and PMT6 may specifically modulate a much narrower spectrum of target proteins. Essential protein that plays an important role in virulence. The protein is Dolichyl-phosphate-mannose--protein mannosyltransferase 2 of Candida albicans (strain SC5314 / ATCC MYA-2876) (Yeast).